The chain runs to 354 residues: Chorismate synthase (354 aa).

2 residues coordinate NADP(+): R48 and R54. Residues 125–127, 238–239, G278, 293–297, and R319 contribute to the FMN site; these read RSS, NA, and KPTSS.

Belongs to the chorismate synthase family. Homotetramer. The cofactor is FMNH2.

It carries out the reaction 5-O-(1-carboxyvinyl)-3-phosphoshikimate = chorismate + phosphate. The protein operates within metabolic intermediate biosynthesis; chorismate biosynthesis; chorismate from D-erythrose 4-phosphate and phosphoenolpyruvate: step 7/7. In terms of biological role, catalyzes the anti-1,4-elimination of the C-3 phosphate and the C-6 proR hydrogen from 5-enolpyruvylshikimate-3-phosphate (EPSP) to yield chorismate, which is the branch point compound that serves as the starting substrate for the three terminal pathways of aromatic amino acid biosynthesis. This reaction introduces a second double bond into the aromatic ring system. In Buchnera aphidicola subsp. Acyrthosiphon pisum (strain 5A), this protein is Chorismate synthase.